Reading from the N-terminus, the 319-residue chain is COP9 signalosome complex subunit 6 (319 aa).

An MPN domain is found at 33 to 166 (VALHPLVILN…VSVYESVIDI (134 aa)).

The protein belongs to the peptidase M67A family. CSN6 subfamily. Component of the CSN complex, probably composed of cops1, cops2, cops3, cops4, cops5, cops6, cops7, cops8 and cops9.

Its subcellular location is the cytoplasm. The protein localises to the nucleus. Component of the COP9 signalosome complex (CSN), a complex involved in various cellular and developmental processes. The CSN complex is an essential regulator of the ubiquitin (Ubl) conjugation pathway by mediating the deneddylation of the cullin subunits of E3 ligase complexes, leading to modify the Ubl ligase activity. The sequence is that of COP9 signalosome complex subunit 6 (cops6) from Xenopus tropicalis (Western clawed frog).